The chain runs to 258 residues: Phosphate import ATP-binding protein PstB (258 aa).

One can recognise an ABC transporter domain in the interval 5-253 (LDLNDVNIYY…PTKKETEDYI (249 aa)). Position 37–44 (37–44 (GPSGCGKS)) interacts with ATP.

It belongs to the ABC transporter superfamily. Phosphate importer (TC 3.A.1.7) family. As to quaternary structure, the complex is composed of two ATP-binding proteins (PstB), two transmembrane proteins (PstC and PstA) and a solute-binding protein (PstS).

It is found in the cell membrane. It carries out the reaction phosphate(out) + ATP + H2O = ADP + 2 phosphate(in) + H(+). Its function is as follows. Part of the ABC transporter complex PstSACB involved in phosphate import. Responsible for energy coupling to the transport system. This is Phosphate import ATP-binding protein PstB from Corynebacterium jeikeium (strain K411).